The following is a 353-amino-acid chain: DNA integrity scanning protein DisA (353 aa).

Residues 6–144 enclose the DAC domain; that stretch reads DKELMNILKI…GGIKYVLRDS (139 aa). ATP-binding positions include Gly73, Leu91, and 104–108; that span reads TRHRT.

The protein belongs to the DisA family. In terms of assembly, homooctamer. Mg(2+) is required as a cofactor.

It carries out the reaction 2 ATP = 3',3'-c-di-AMP + 2 diphosphate. Its function is as follows. Participates in a DNA-damage check-point that is active prior to asymmetric division when DNA is damaged. DisA forms globular foci that rapidly scan along the chromosomes during sporulation, searching for lesions. When a lesion is present, DisA pauses at the lesion site. This triggers a cellular response that culminates in a temporary block in sporulation initiation. Functionally, also has diadenylate cyclase activity, catalyzing the condensation of 2 ATP molecules into cyclic di-AMP (c-di-AMP). c-di-AMP acts as a signaling molecule that couples DNA integrity with progression of sporulation. The rise in c-di-AMP level generated by DisA while scanning the chromosome, operates as a positive signal that advances sporulation; upon encountering a lesion, the DisA focus arrests at the damaged site and halts c-di-AMP synthesis. This Clostridium botulinum (strain Okra / Type B1) protein is DNA integrity scanning protein DisA.